The chain runs to 995 residues: ATP-dependent RNA helicase DBP10 (995 aa).

Residues 1-120 (MAGVQKRKRD…TQTGDDEDDV (120 aa)) are disordered. Composition is skewed to acidic residues over residues 12-25 (EDQD…DDIA) and 37-50 (SESD…EVEA). The span at 71-81 (VNNKKKAENKD) shows a compositional bias: basic and acidic residues. Serine 101 is subject to Phosphoserine. Positions 137–165 (GSFPSFGLSKIVLNNIKRKGFRQPTPIQR) match the Q motif motif. The Helicase ATP-binding domain maps to 168 to 340 (IPLILQSRDI…KAGLVNPVLV (173 aa)). Residue 181–188 (ARTGSGKT) participates in ATP binding. A DEAD box motif is present at residues 288–291 (DEAD). Disordered regions lie at residues 389–427 (LQNS…PAAN) and 889–973 (GSRE…EQIR). 2 positions are modified to phosphoserine: serine 398 and serine 400. Composition is skewed to basic residues over residues 407 to 422 (QKKR…RKQK) and 914 to 924 (VRGKFKHKQMK). Positions 418-568 (FRKQKMPAAN…PMYDSLVDVM (151 aa)) constitute a Helicase C-terminal domain. Basic and acidic residues predominate over residues 964-973 (SELKSTEQIR).

Belongs to the DEAD box helicase family. DDX54/DBP10 subfamily. As to quaternary structure, interacts with RRP1 and associates with pre-ribosomal particles.

The protein resides in the nucleus. It localises to the nucleolus. It carries out the reaction ATP + H2O = ADP + phosphate + H(+). Functionally, ATP-binding RNA helicase involved in the biogenesis of 60S ribosomal subunits and is required for the normal formation of 25S and 5.8S rRNAs. The protein is ATP-dependent RNA helicase DBP10 (DBP10) of Saccharomyces cerevisiae (strain ATCC 204508 / S288c) (Baker's yeast).